A 556-amino-acid chain; its full sequence is MSVSAFNRRWAAVILEALTRHGVRHICIAPGSRSTPLTLAAAENSAFIHHTHFDERGLGHLALGLAKVSKQPVAVIVTSGTAVANLYPALIEAGLTGEKLILLTADRPPELIDCGANQAIRQPGMFASHPTHSISLPRPTQDIPARWLVSTIDHALGTLHAGGVHINCPFAEPLYGEMDDTGISWQQRLGDWWQDDKPWLREAPRRESEKQRDWFFWRQKRGVVVAGRMSAEEGKKVALWAQTLGWPLIGDVLSQTGQPLPCADLWLGNAKATSELQQAQIVVQLGSSLTGKRLLQWQASCEPEEYWIVDDIEGRLDPAHHRGRRLIANIADWLELHPAEKRQPWCVEIPRLAEQAMQAVIARRDAFGEAQLAHRISDYLPEQGQLFVGNSLVVRLIDALSQLPAGYPVYSNRGASGIDGLLSTAAGAQRASGKPTLAIVGDLSALYDLNALALLRQVSAPLVLIVVNNNGGQIFSLLPTPKSERERFYLMPQNVHFEHAAAMFELKYHRPQNWQELETTLVDAWRTPTTTVIEMVVNDTDGAQTLQQLLAQVSHL.

It belongs to the TPP enzyme family. MenD subfamily. In terms of assembly, homodimer. Mg(2+) is required as a cofactor. Mn(2+) serves as cofactor. Requires thiamine diphosphate as cofactor.

It catalyses the reaction isochorismate + 2-oxoglutarate + H(+) = 5-enolpyruvoyl-6-hydroxy-2-succinyl-cyclohex-3-ene-1-carboxylate + CO2. The protein operates within quinol/quinone metabolism; 1,4-dihydroxy-2-naphthoate biosynthesis; 1,4-dihydroxy-2-naphthoate from chorismate: step 2/7. It functions in the pathway quinol/quinone metabolism; menaquinone biosynthesis. Functionally, catalyzes the thiamine diphosphate-dependent decarboxylation of 2-oxoglutarate and the subsequent addition of the resulting succinic semialdehyde-thiamine pyrophosphate anion to isochorismate to yield 2-succinyl-5-enolpyruvyl-6-hydroxy-3-cyclohexene-1-carboxylate (SEPHCHC). The chain is 2-succinyl-5-enolpyruvyl-6-hydroxy-3-cyclohexene-1-carboxylate synthase from Escherichia coli (strain UTI89 / UPEC).